The sequence spans 374 residues: C-X-C chemokine receptor type 5 (374 aa).

Residues 1-57 (MNYPLTLDMGSITYNMDDLYKELAFYSNSTEIPLQDSNFCSTVEGPLLTSFKAVFMP) are Extracellular-facing. N28 carries N-linked (GlcNAc...) asparagine glycosylation. The helical transmembrane segment at 58 to 78 (VAYSLIFLLGMMGNILVLVIL) threads the bilayer. Topologically, residues 79–90 (ERHRHTRSSTET) are cytoplasmic. The helical transmembrane segment at 91 to 111 (FLFHLAVADLLLVFILPFAVA) threads the bilayer. Topologically, residues 112–126 (EGSVGWVLGTFLCKT) are extracellular. C124 and C204 are oxidised to a cystine. Residues 127–147 (VIALHKINFYCSSLLLACIAV) traverse the membrane as a helical segment. Residues 148–169 (DRYLAIVHAVHAYRRRRLLSIH) lie on the Cytoplasmic side of the membrane. A helical membrane pass occupies residues 170–190 (ITCTAIWLAGFLFALPELLFA). Residues 191–221 (KVGQPHNNDSLPQCTFSQENEAETRAWFTSR) lie on the Extracellular side of the membrane. N198 carries an N-linked (GlcNAc...) asparagine glycan. A helical membrane pass occupies residues 222-242 (FLYHIGGFLLPMLVMGWCYVG). The Cytoplasmic segment spans residues 243-261 (VVHRLLQAQRRPQRQKAVR). Residues 262–282 (VAILVTSIFFLCWSPYHIVIF) traverse the membrane as a helical segment. At 283–306 (LDTLERLKAVNSSCELSGYLSVAI) the chain is on the extracellular side. A helical transmembrane segment spans residues 307–327 (TLCEFLGLAHCCLNPMLYTFA). Topologically, residues 328-374 (GVKFRSDLSRLLTKLGCAGPASLCQLFPNWRKSSLSESENATSLTTF) are cytoplasmic.

Belongs to the G-protein coupled receptor 1 family. As to expression, mainly in spleen, in resting B-cells.

It is found in the cell membrane. Its function is as follows. Cytokine receptor that binds to B-lymphocyte chemoattractant (BLC). Involved in B-cell migration into B-cell follicles of spleen and Peyer patches but not into those of mesenteric or peripheral lymph nodes. This is C-X-C chemokine receptor type 5 (Cxcr5) from Mus musculus (Mouse).